The primary structure comprises 1031 residues: Semaphorin-6A (1031 aa).

A signal peptide spans 1-18 (MRPAALLLCLTLLHCAGA). Over 19 to 649 (GFPEDSEPIS…KSNDQLVPVT (631 aa)) the chain is Extracellular. Residues 24 to 512 (SEPISISHGN…FSTCVIKVPL (489 aa)) enclose the Sema domain. Asn-33, Asn-49, and Asn-65 each carry an N-linked (GlcNAc...) asparagine glycan. 4 disulfides stabilise this stretch: Cys-107–Cys-117, Cys-135–Cys-144, Cys-258–Cys-369, and Cys-283–Cys-328. Residue Asn-282 is glycosylated (N-linked (GlcNAc...) asparagine). 2 N-linked (GlcNAc...) asparagine glycosylation sites follow: Asn-434 and Asn-461. Disulfide bonds link Cys-477–Cys-506, Cys-515–Cys-533, Cys-521–Cys-568, and Cys-525–Cys-542. A helical transmembrane segment spans residues 650-670 (LLAIAVILAFVMGAVFSGIIV). Topologically, residues 671-1031 (YCVCDHRRKD…TSMKPNDACT (361 aa)) are cytoplasmic. The residue at position 698 (Ser-698) is a Phosphoserine. Disordered regions lie at residues 754-777 (ALPT…SREW), 861-902 (SSKS…TGLS), and 914-1031 (GLEY…DACT). Positions 921 to 931 (YPTNSLTRSHQ) are enriched in polar residues. The span at 932 to 951 (TTTLKRNNTNSSNSSHLSRN) shows a compositional bias: low complexity. Ser-953 bears the Phosphoserine mark. Composition is skewed to polar residues over residues 971 to 998 (QVHS…SLTR) and 1019 to 1031 (PLST…DACT).

It belongs to the semaphorin family. Active as a homodimer or oligomer. The SEMA6A homodimer interacts with a PLXNA2 homodimer, giving rise to a heterotetramer. Interacts with EVL. Particularly high levels in spinal cord, cerebellum, metencephalon, superior and inferior colliculus, diencephalon, olfactory bulb and eye.

It localises to the cell membrane. Functionally, cell surface receptor for PLXNA2 that plays an important role in cell-cell signaling. Required for normal granule cell migration in the developing cerebellum. Promotes reorganization of the actin cytoskeleton and plays an important role in axon guidance in the developing central nervous system. Can act as repulsive axon guidance cue. Has repulsive action towards migrating granular neurons. May play a role in channeling sympathetic axons into the sympathetic chains and controlling the temporal sequence of sympathetic target innervation. This chain is Semaphorin-6A (Sema6a), found in Mus musculus (Mouse).